A 172-amino-acid polypeptide reads, in one-letter code: Ribosome maturation factor RimM (172 aa).

A PRC barrel domain is found at Glu96–Leu170.

It belongs to the RimM family. As to quaternary structure, binds ribosomal protein uS19.

The protein resides in the cytoplasm. Its function is as follows. An accessory protein needed during the final step in the assembly of 30S ribosomal subunit, possibly for assembly of the head region. Essential for efficient processing of 16S rRNA. May be needed both before and after RbfA during the maturation of 16S rRNA. It has affinity for free ribosomal 30S subunits but not for 70S ribosomes. The protein is Ribosome maturation factor RimM of Listeria monocytogenes serotype 4b (strain CLIP80459).